The following is a 160-amino-acid chain: Putative pre-16S rRNA nuclease (160 aa).

Belongs to the YqgF nuclease family.

It is found in the cytoplasm. Could be a nuclease involved in processing of the 5'-end of pre-16S rRNA. This Rhodopseudomonas palustris (strain HaA2) protein is Putative pre-16S rRNA nuclease.